Reading from the N-terminus, the 330-residue chain is Glycerol-3-phosphate dehydrogenase [NAD(P)+] (330 aa).

Residues serine 11, phenylalanine 12, arginine 32, and lysine 106 each contribute to the NADPH site. Residues lysine 106, glycine 133, and serine 135 each coordinate sn-glycerol 3-phosphate. Alanine 137 is an NADPH binding site. Positions 188, 241, 251, 252, and 253 each coordinate sn-glycerol 3-phosphate. Lysine 188 serves as the catalytic Proton acceptor. Arginine 252 is an NADPH binding site. The NADPH site is built by valine 276 and glutamate 278.

The protein belongs to the NAD-dependent glycerol-3-phosphate dehydrogenase family.

Its subcellular location is the cytoplasm. The catalysed reaction is sn-glycerol 3-phosphate + NAD(+) = dihydroxyacetone phosphate + NADH + H(+). It carries out the reaction sn-glycerol 3-phosphate + NADP(+) = dihydroxyacetone phosphate + NADPH + H(+). Its pathway is membrane lipid metabolism; glycerophospholipid metabolism. In terms of biological role, catalyzes the reduction of the glycolytic intermediate dihydroxyacetone phosphate (DHAP) to sn-glycerol 3-phosphate (G3P), the key precursor for phospholipid synthesis. This is Glycerol-3-phosphate dehydrogenase [NAD(P)+] from Clostridium botulinum (strain Eklund 17B / Type B).